The chain runs to 879 residues: Beta-mannosidase (879 aa).

The signal sequence occupies residues 1–17 (MLLRLLLLLAPCGAGFA). N-linked (GlcNAc...) asparagine glycans are attached at residues Asn35 and Asn77. Residues Cys167 and Cys176 are joined by a disulfide bond. 190–192 (WDW) is a binding site for substrate. N-linked (GlcNAc...) asparagine glycosylation is found at Asn297 and Asn302. Substrate is bound at residue Asn456. Glu457 serves as the catalytic Proton donor. 3 disulfide bridges follow: Cys540-Cys629, Cys732-Cys761, and Cys764-Cys769. Residue Glu554 is the Nucleophile of the active site. An N-linked (GlcNAc...) asparagine glycan is attached at Asn607. An N-linked (GlcNAc...) asparagine glycan is attached at Asn803.

The protein belongs to the glycosyl hydrolase 2 family. In terms of assembly, monomer. In terms of processing, the N-terminus is blocked. N-glycosylated. As to expression, detected in kidney (at protein level). Highest expression is found in thyroid tissue. The amount of transcript is significantly higher in normal tissues than in tissues affected by the disease.

It localises to the lysosome. It catalyses the reaction Hydrolysis of terminal, non-reducing beta-D-mannose residues in beta-D-mannosides.. The protein operates within glycan metabolism; N-glycan degradation. Its function is as follows. Exoglycosidase that cleaves the single beta-linked mannose residue from the non-reducing end of all N-linked glycoprotein oligosaccharides. This Bos taurus (Bovine) protein is Beta-mannosidase (MANBA).